A 200-amino-acid chain; its full sequence is dITP/XTP pyrophosphatase (200 aa).

7-12 (TQNKRK) contacts substrate. Mg(2+) contacts are provided by E42 and D71. Residue D71 is the Proton acceptor of the active site. Residues S72, 156-159 (FGYD), K179, and 184-185 (HR) each bind substrate.

The protein belongs to the HAM1 NTPase family. As to quaternary structure, homodimer. Mg(2+) is required as a cofactor.

The catalysed reaction is XTP + H2O = XMP + diphosphate + H(+). The enzyme catalyses dITP + H2O = dIMP + diphosphate + H(+). It carries out the reaction ITP + H2O = IMP + diphosphate + H(+). Pyrophosphatase that catalyzes the hydrolysis of nucleoside triphosphates to their monophosphate derivatives, with a high preference for the non-canonical purine nucleotides XTP (xanthosine triphosphate), dITP (deoxyinosine triphosphate) and ITP. Seems to function as a house-cleaning enzyme that removes non-canonical purine nucleotides from the nucleotide pool, thus preventing their incorporation into DNA/RNA and avoiding chromosomal lesions. The sequence is that of dITP/XTP pyrophosphatase from Malacoplasma penetrans (strain HF-2) (Mycoplasma penetrans).